The chain runs to 212 residues: ATP-dependent dethiobiotin synthetase BioD (212 aa).

Position 13-18 (13-18) interacts with ATP; that stretch reads GIGKTV. T17 lines the Mg(2+) pocket. Residue K33 is part of the active site. S37 contributes to the substrate binding site. E100 contacts Mg(2+). ATP is bound by residues 100-103, 160-161, and 184-186; these read EGAG, IS, and PLL.

It belongs to the dethiobiotin synthetase family. As to quaternary structure, homodimer. Requires Mg(2+) as cofactor.

Its subcellular location is the cytoplasm. It carries out the reaction (7R,8S)-7,8-diammoniononanoate + CO2 + ATP = (4R,5S)-dethiobiotin + ADP + phosphate + 3 H(+). Its pathway is cofactor biosynthesis; biotin biosynthesis; biotin from 7,8-diaminononanoate: step 1/2. In terms of biological role, catalyzes a mechanistically unusual reaction, the ATP-dependent insertion of CO2 between the N7 and N8 nitrogen atoms of 7,8-diaminopelargonic acid (DAPA, also called 7,8-diammoniononanoate) to form a ureido ring. The chain is ATP-dependent dethiobiotin synthetase BioD from Brucella abortus (strain S19).